The following is a 151-amino-acid chain: IFN signaling evasion protein OPG029 (151 aa).

Belongs to the orthopoxvirus OPG029 family. In terms of assembly, interacts with host TANK, TBKBP1 and AZI2; these interactions prevent interferon production. Interacts with host STAT2.

Prevents establishment of cellular antiviral state by blocking virus-induced phosphorylation and activation of interferon regulatory factors 3/IRF3 and 7/IRF7, transcription factors critical for the induction of interferons alpha and beta. This blockage is produced through the inhibition of host TBK1, by binding host TBK1 adapter proteins TBKBP1 and AZI2, thereby producing a strong inhibition of the phosphorylation and activation of IRF3 and IRF7. Also acts as an inhibitor of the cellular response to type I IFN by interacting with host STAT2. Mechanistically, exerts its inhibitory effect after host ISGF3 complex (composed of STAT1, STAT2 and IRF9) binding to the interferon stimulated response element (ISRE). The chain is IFN signaling evasion protein OPG029 (OPG029) from Vaccinia virus (strain Western Reserve) (VACV).